A 433-amino-acid polypeptide reads, in one-letter code: MKQYLEIESVFAREILDSRGNPTVEVEVIAEGGFVGRAAVPSGASTGAFEAVELRDNDKNRYLGKGVQKAVENVNNIIAPEVEGMNVFDQAAVDNLMISLDGTPNKSKLGANAILGVSLATAKAAAEALGLSLYQYIGGVNAKTLPVPMMNIINGGKHADNSVNIQEFMIMPVGASSFRHALQMCAEVFHNLKKVLKDKGYSTAVGDEGGFAPNLKTDEEAIQVILEAVEKAGYKPGDDFRLAIDAASTEMYQEDGTYLFWKSGVKKTKEEMINYWEELVNKYPIISLEDGVAEEDWEGWKMLTERLGKRIQLVGDDLFVTNTTRLKKGIELGVANSILIKVNQIGTLTETLDAIEMANRAGYTAVVSHRSGETEDATIADIAVATNAGQIKTGAPSRTDRVAKYNQLLRIEEEIGAVSRYPGLDAWFNLKKK.

Position 166 (Gln166) interacts with (2R)-2-phosphoglycerate. Residue Glu208 is the Proton donor of the active site. Asp245, Glu289, and Asp316 together coordinate Mg(2+). Positions 341, 370, 371, and 392 each coordinate (2R)-2-phosphoglycerate. The active-site Proton acceptor is the Lys341.

This sequence belongs to the enolase family. Mg(2+) is required as a cofactor.

It localises to the cytoplasm. The protein localises to the secreted. It is found in the cell surface. The enzyme catalyses (2R)-2-phosphoglycerate = phosphoenolpyruvate + H2O. It participates in carbohydrate degradation; glycolysis; pyruvate from D-glyceraldehyde 3-phosphate: step 4/5. Catalyzes the reversible conversion of 2-phosphoglycerate (2-PG) into phosphoenolpyruvate (PEP). It is essential for the degradation of carbohydrates via glycolysis. This is Enolase from Acetivibrio thermocellus (strain ATCC 27405 / DSM 1237 / JCM 9322 / NBRC 103400 / NCIMB 10682 / NRRL B-4536 / VPI 7372) (Clostridium thermocellum).